The primary structure comprises 416 residues: Muscle-specific homeobox protein tinman (416 aa).

2 stretches are compositionally biased toward polar residues: residues 1 to 11 (MLQHHQQQAQS) and 18 to 33 (YTQSPSPGSLTNADAL). Disordered regions lie at residues 1–33 (MLQHHQQQAQSGGYYDHYTQSPSPGSLTNADAL), 246–305 (TASN…RKPR), and 391–416 (VMWPPTMQQSQQQQQHHAQQQQMQHM). A compositionally biased stretch (low complexity) spans 281 to 295 (NSISGNSNPGSNSGS). The segment at residues 301 to 360 (KRKPRVLFSQAQVLELECRFRLKKYLTGAEREIIAQKLNLSATQVKIWFQNRRYKSKRGD) is a DNA-binding region (homeobox). Low complexity predominate over residues 397–416 (MQQSQQQQQHHAQQQQMQHM).

It localises to the nucleus. Its function is as follows. Required for the development of heart and visceral muscle; for the formation of somatic muscles. Has a crucial function in the early mesodermal subdivisions. In Drosophila melanogaster (Fruit fly), this protein is Muscle-specific homeobox protein tinman (tin).